We begin with the raw amino-acid sequence, 137 residues long: Peptide methionine sulfoxide reductase MsrB (137 aa).

Positions 7 to 129 (AEELKKKLSE…NSASLAFSDE (123 aa)) constitute a MsrB domain. The Zn(2+) site is built by Cys46, Cys49, Cys95, and Cys98. Cys118 acts as the Nucleophile in catalysis.

This sequence belongs to the MsrB Met sulfoxide reductase family. Zn(2+) is required as a cofactor.

The catalysed reaction is L-methionyl-[protein] + [thioredoxin]-disulfide + H2O = L-methionyl-(R)-S-oxide-[protein] + [thioredoxin]-dithiol. The polypeptide is Peptide methionine sulfoxide reductase MsrB (Salmonella dublin (strain CT_02021853)).